The primary structure comprises 85 residues: Large ribosomal subunit protein bL27 (85 aa).

The segment at 1-21 is disordered; sequence MAHKKAGGSTRNGRDSEGKRL.

This sequence belongs to the bacterial ribosomal protein bL27 family.

The chain is Large ribosomal subunit protein bL27 from Hamiltonella defensa subsp. Acyrthosiphon pisum (strain 5AT).